Consider the following 530-residue polypeptide: Seeligeriolysin (530 aa).

The signal sequence occupies residues 1–25 (MKIFGLVIMSLLFVSLPITQQPEAR). The segment at 36-55 (TISPAETPESPPATPKTPVE) is disordered. The next 4 beta stranded transmembrane spans lie at 215-228 (ESQL…AFKA), 235-244 (VNFEAISDGK), 313-322 (SNKVKTAFEA), and 330-342 (KGDV…IKNS). The short motif at 484 to 494 (ECTGLFWEWWR) is the Conserved undecapeptide element. The short motif at 516–517 (TL) is the Cholesterol binding element.

The protein belongs to the cholesterol-dependent cytolysin family. As to quaternary structure, homooligomeric pore complex of 35 to 50 subunits; when inserted in the host membrane.

It is found in the secreted. Its subcellular location is the host cell membrane. A cholesterol-dependent toxin that causes cytolysis by forming pores in cholesterol containing host membranes. L.seeligeri is non-pathogenic, perhaps in part because this protein is about 25% as toxic as listeriolysin O. Mutating a single residue in the undecapeptide increases toxicity 2-fold. After binding to target membranes, the protein undergoes a major conformation change, leading to its insertion in the host membrane and formation of an oligomeric pore complex. Cholesterol is required for binding to host membranes, membrane insertion and pore formation; cholesterol binding is mediated by a Thr-Leu pair in the C-terminus. Can be reversibly inactivated by oxidation. In Listeria seeligeri, this protein is Seeligeriolysin.